The chain runs to 431 residues: Protein EARLY STARVATION 1, chloroplastic (431 aa).

Residues 1–19 (MAACSRGLVARPFDLTARG) constitute a chloroplast transit peptide. Disordered stretches follow at residues 65 to 126 (GNKP…DTGI) and 403 to 431 (GVYPTIDFSASSPAPPSDDPPGMPPSPLE). A compositionally biased stretch (pro residues) spans 415-431 (PAPPSDDPPGMPPSPLE).

It belongs to the ESV1 family.

It is found in the plastid. The protein localises to the chloroplast stroma. In terms of biological role, binds preferentially to highly ordered alpha-glucans, such as starch and crystalline maltodextrins. Involved in the organization of the starch granule matrix, thus influencing starch turnover by modulating the accessibility of starch polymers to modifying and degrading enzymes. Required for the control of starch degradation in leaves and starch distribution in nonphotosynthetic parts. Promotes gravitropic responses, negative in shoots but positive in roots, by facilitating starch granules (statoliths) formation in hypocotyls and roots columella. Facilitates tight packing of starch granules in grains. This chain is Protein EARLY STARVATION 1, chloroplastic, found in Oryza sativa subsp. japonica (Rice).